Here is a 257-residue protein sequence, read N- to C-terminus: 3-deoxy-manno-octulosonate cytidylyltransferase (257 aa).

The protein belongs to the KdsB family.

The protein localises to the cytoplasm. The enzyme catalyses 3-deoxy-alpha-D-manno-oct-2-ulosonate + CTP = CMP-3-deoxy-beta-D-manno-octulosonate + diphosphate. The protein operates within nucleotide-sugar biosynthesis; CMP-3-deoxy-D-manno-octulosonate biosynthesis; CMP-3-deoxy-D-manno-octulosonate from 3-deoxy-D-manno-octulosonate and CTP: step 1/1. It functions in the pathway bacterial outer membrane biogenesis; lipopolysaccharide biosynthesis. Activates KDO (a required 8-carbon sugar) for incorporation into bacterial lipopolysaccharide in Gram-negative bacteria. This is 3-deoxy-manno-octulosonate cytidylyltransferase from Halorhodospira halophila (strain DSM 244 / SL1) (Ectothiorhodospira halophila (strain DSM 244 / SL1)).